Reading from the N-terminus, the 182-residue chain is Alkyl hydroperoxide reductase AhpD (182 aa).

Cys132 functions as the Proton donor in the catalytic mechanism. Cysteines 132 and 135 form a disulfide. Cys135 (cysteine sulfenic acid (-SOH) intermediate) is an active-site residue.

It belongs to the AhpD family.

It carries out the reaction N(6)-[(R)-dihydrolipoyl]-L-lysyl-[lipoyl-carrier protein] + a hydroperoxide = N(6)-[(R)-lipoyl]-L-lysyl-[lipoyl-carrier protein] + an alcohol + H2O. Its function is as follows. Antioxidant protein with alkyl hydroperoxidase activity. Required for the reduction of the AhpC active site cysteine residues and for the regeneration of the AhpC enzyme activity. This Bradyrhizobium diazoefficiens (strain JCM 10833 / BCRC 13528 / IAM 13628 / NBRC 14792 / USDA 110) protein is Alkyl hydroperoxide reductase AhpD.